We begin with the raw amino-acid sequence, 134 residues long: Small ribosomal subunit protein eS24A (134 aa).

Ser2 is modified (N-acetylserine). The disordered stretch occupies residues 100-134 (IQKVARQQRKQRKNRGKKVFGTGKRLAKRKSKQQD). Basic residues-rich tracts occupy residues 105–117 (RQQRKQRKNRGKK) and 124–134 (RLAKRKSKQQD).

It belongs to the eukaryotic ribosomal protein eS24 family. Component of the small ribosomal subunit (SSU). Mature yeast ribosomes consist of a small (40S) and a large (60S) subunit. The 40S small subunit contains 1 molecule of ribosomal RNA (18S rRNA) and at least 33 different proteins. The large 60S subunit contains 3 rRNA molecules (25S, 5.8S and 5S rRNA) and at least 46 different proteins.

Its subcellular location is the cytoplasm. Functionally, component of the ribosome, a large ribonucleoprotein complex responsible for the synthesis of proteins in the cell. The small ribosomal subunit (SSU) binds messenger RNAs (mRNAs) and translates the encoded message by selecting cognate aminoacyl-transfer RNA (tRNA) molecules. The large subunit (LSU) contains the ribosomal catalytic site termed the peptidyl transferase center (PTC), which catalyzes the formation of peptide bonds, thereby polymerizing the amino acids delivered by tRNAs into a polypeptide chain. The nascent polypeptides leave the ribosome through a tunnel in the LSU and interact with protein factors that function in enzymatic processing, targeting, and the membrane insertion of nascent chains at the exit of the ribosomal tunnel. This Schizosaccharomyces pombe (strain 972 / ATCC 24843) (Fission yeast) protein is Small ribosomal subunit protein eS24A (rps2401).